Here is a 942-residue protein sequence, read N- to C-terminus: AP-1 complex subunit beta (942 aa).

6 HEAT repeats span residues 45–82 (KDVSMLFTHVLNCMQTHNLELKKLVYLYVMNYAKNHPD), 117–154 (NITEHLCEPLRHALKDQDPYVRKTAAVCVAKLYDVNPE), 156–193 (VENQGFLNILNDLLGDSNPMVVANAVASLTEIDEVSKK), 273–313 (DVIR…KRPE), 384–421 (RASERCIQVLLDLIQTKVNYVVQEAIIVIKDIFRKYPN), and 458–495 (DNAHELLNSFLEGFKDENSQVQLQLLTSIVKLFLKRPK). The interval 590–700 (GLRNKEEEDE…NDLSFLGGGG (111 aa)) is disordered. Acidic residues predominate over residues 596–609 (EEDEEEPDYVDDDN). 2 stretches are compositionally biased toward low complexity: residues 613–645 (QQGGQQQQGGYQQQQQQQQQGGYQQQQPQQQQP) and 664–677 (NNNNNNYGNNNNNN). Polar residues predominate over residues 678–693 (MYSPQPQQFNGNSNDL).

This sequence belongs to the adaptor complexes large subunit family. In terms of assembly, adaptor protein complex 1 (AP-1) is a heterotetramer composed of two large adaptins (gamma-type subunit and beta-type subunit), a medium adaptin (mu-type subunit) and a small adaptin (sigma-type subunit).

Its subcellular location is the golgi apparatus. The protein resides in the trans-Golgi network. The protein localises to the cytoplasmic vesicle. It localises to the clathrin-coated vesicle membrane. In terms of biological role, subunit of clathrin-associated adaptor protein complex 1 that plays a role in protein sorting in the trans-Golgi network (TGN) and endosomes. The AP complexes mediate the recruitment of clathrin to membranes and the recognition of sorting signals within the cytosolic tails of transmembrane cargo molecules. Also involved in early steps of phagocytosis and macropinocytosis. The sequence is that of AP-1 complex subunit beta (ap1b1) from Dictyostelium discoideum (Social amoeba).